Here is a 1639-residue protein sequence, read N- to C-terminus: Peroxide stress-activated histidine kinase mak1 (1639 aa).

The span at 38 to 49 (SFTNSQNSSVGS) shows a compositional bias: polar residues. Residues 38-76 (SFTNSQNSSVGSVHSPILESPTSLNRQHRNSFSFNNVSS) form a disordered region. Residues 67 to 76 (NSFSFNNVSS) show a composition bias toward low complexity. Residues 716–786 (PFPLLKVIID…NDWKSSLFSG (71 aa)) form the PAS 1 domain. Residues 789 to 841 (FYHEIRLQRFDNVYRYFICRAVPLRDCTGSVLHFFGTMTDVHDQKLAERELQK) form the PAC 1 domain. A PAS 2 domain is found at 848 to 920 (NENSYRSLAE…ESLEGTFNNQ (73 aa)). The 54-residue stretch at 929-982 (FAAEIRFRSTDGHYRWHLVKSVCVNNSADTSTNLWLGTCTDIHDHKMLEEKLQE) folds into the PAC 2 domain. The 224-residue stretch at 1000-1223 (NMSHEIRTPL…RFMWTATFTM (224 aa)) folds into the Histidine kinase domain. Phosphohistidine; by autocatalysis is present on His1003. Positions 1507-1629 (SVLLAEDNII…HLSLIISGIL (123 aa)) constitute a Response regulatory domain. Residue Asp1559 is modified to 4-aspartylphosphate.

The protein resides in the cytoplasm. It carries out the reaction ATP + protein L-histidine = ADP + protein N-phospho-L-histidine.. Functionally, involved in the control of the SAPK-dependent transcriptional response to peroxide stress. Also has a role in G2/M regulation. The protein is Peroxide stress-activated histidine kinase mak1 (mak1) of Schizosaccharomyces pombe (strain 972 / ATCC 24843) (Fission yeast).